The primary structure comprises 288 residues: Transmembrane and coiled-coil domain-containing protein 5A (288 aa).

The stretch at Lys10–Lys192 forms a coiled coil. The chain crosses the membrane as a helical span at residues Ile224–Phe244.

The protein belongs to the TMCO5 family.

It is found in the endoplasmic reticulum membrane. Its subcellular location is the nucleus membrane. This Homo sapiens (Human) protein is Transmembrane and coiled-coil domain-containing protein 5A (TMCO5A).